The chain runs to 430 residues: Protein trichome birefringence-like 24 (430 aa).

The chain crosses the membrane as a helical; Signal-anchor for type II membrane protein span at residues 15–35 (VLLIKLISAILISFFAFRLFI). The short motif at 153–155 (GDS) is the GDS motif element. The DCXHWCLPGXXDXWN motif signature appears at 406-420 (DCLHWCLPGPFDYLN).

This sequence belongs to the PC-esterase family. TBL subfamily.

The protein resides in the membrane. In terms of biological role, may act as a bridging protein that binds pectin and other cell wall polysaccharides. Probably involved in maintaining esterification of pectins. May be involved in the specific O-acetylation of cell wall polymers. The chain is Protein trichome birefringence-like 24 (TBL24) from Arabidopsis thaliana (Mouse-ear cress).